We begin with the raw amino-acid sequence, 123 residues long: Small ribosomal subunit protein uS12 (123 aa).

3-methylthioaspartic acid is present on D89. Residues 104–123 (TAGVKDRKQARSKYGAKRPK) form a disordered region. Residues 113–123 (ARSKYGAKRPK) show a composition bias toward basic residues.

It belongs to the universal ribosomal protein uS12 family. In terms of assembly, part of the 30S ribosomal subunit. Contacts proteins S8 and S17. May interact with IF1 in the 30S initiation complex.

Its function is as follows. With S4 and S5 plays an important role in translational accuracy. Interacts with and stabilizes bases of the 16S rRNA that are involved in tRNA selection in the A site and with the mRNA backbone. Located at the interface of the 30S and 50S subunits, it traverses the body of the 30S subunit contacting proteins on the other side and probably holding the rRNA structure together. The combined cluster of proteins S8, S12 and S17 appears to hold together the shoulder and platform of the 30S subunit. The polypeptide is Small ribosomal subunit protein uS12 (Neisseria gonorrhoeae (strain ATCC 700825 / FA 1090)).